The sequence spans 1020 residues: Sodium/potassium-transporting ATPase subunit alpha-2 (1020 aa).

The propeptide occupies 1 to 5 (MGRGA). The tract at residues 1–31 (MGRGAGREYSPAATTAENGGGKKKQKEKELD) is disordered. Residues 6 to 85 (GREYSPAATT…NALTPPPTTP (80 aa)) lie on the Cytoplasmic side of the membrane. Serine 10 is subject to Phosphoserine. Residues 80–82 (PPP) form an interaction with phosphoinositide-3 kinase region. Residues 86-106 (EWVKFCRQLFGGFSILLWIGA) traverse the membrane as a helical segment. The Extracellular portion of the chain corresponds to 107 to 129 (ILCFLAFGIQAAMEDEPSNDNLY). Residues 130-150 (LGVVLAAVVIVTGCFSYYQEA) traverse the membrane as a helical segment. Residues 151-286 (KSSKIMDSFK…VGRTPIAMEI (136 aa)) are Cytoplasmic-facing. The segment covering 212-227 (DNSSLTGESEPQTRSP) has biased composition (polar residues). The disordered stretch occupies residues 212–231 (DNSSLTGESEPQTRSPEFTH). The chain crosses the membrane as a helical span at residues 287 to 306 (EHFIQLITGVAVFLGVSFFV). At 307-318 (LSLILGYSWLEA) the chain is on the extracellular side. Residues 319–336 (VIFLIGIIVANVPEGLLA) form a helical membrane-spanning segment. Topologically, residues 337–769 (TVTVCLTLTA…EEGRLIFDNL (433 aa)) are cytoplasmic. Catalysis depends on aspartate 374, which acts as the 4-aspartylphosphate intermediate. A phosphoserine mark is found at serine 439, serine 450, serine 496, and serine 559. Phosphothreonine is present on threonine 570. A phosphoserine mark is found at serine 587 and serine 672. 2 residues coordinate Mg(2+): aspartate 714 and aspartate 718. The chain crosses the membrane as a helical span at residues 770–789 (KKSIAYTLTSNIPEITPFLL). Over 790 to 799 (FIIANIPLPL) the chain is Extracellular. Residues 800–820 (GTVTILCIDLGTDMVPAISLA) form a helical membrane-spanning segment. Over 821–840 (YEAAESDIMKRQPRNPQTDK) the chain is Cytoplasmic. A Phosphoserine modification is found at serine 826. The helical transmembrane segment at 841-863 (LVNERLISMAYGQIGMIQALGGF) threads the bilayer. Residues 864–915 (FTYFVILAENGFLPSRLLGIRLDWDDRSMNDLEDSYGQEWTYEQRKVVEFTC) are Extracellular-facing. A helical membrane pass occupies residues 916–935 (HTAFFASIVVVQWADLIICK). The Cytoplasmic portion of the chain corresponds to 936–948 (TRRNSVFQQGMKN). A Phosphoserine; by PKA modification is found at serine 940. Residues 949–967 (KILIFGLLEETALAAFLSY) traverse the membrane as a helical segment. Over 968–982 (CPGMGVALRMYPLKV) the chain is Extracellular. A helical transmembrane segment spans residues 983–1003 (TWWFCAFPYSLLIFIYDEVRK). Topologically, residues 1004 to 1020 (LILRRYPGGWVEKETYY) are cytoplasmic.

Belongs to the cation transport ATPase (P-type) (TC 3.A.3) family. Type IIC subfamily. The sodium/potassium-transporting ATPase is composed of a catalytic alpha subunit, an auxiliary non-catalytic beta subunit and an additional regulatory subunit. Interacts with regulatory subunit FXYD1.

Its subcellular location is the membrane. The protein localises to the cell membrane. The enzyme catalyses K(+)(out) + Na(+)(in) + ATP + H2O = K(+)(in) + Na(+)(out) + ADP + phosphate + H(+). Functionally, this is the catalytic component of the active enzyme, which catalyzes the hydrolysis of ATP coupled with the exchange of sodium and potassium ions across the plasma membrane. This action creates the electrochemical gradient of sodium and potassium, providing the energy for active transport of various nutrients. The chain is Sodium/potassium-transporting ATPase subunit alpha-2 (ATP1A2) from Bos taurus (Bovine).